Reading from the N-terminus, the 458-residue chain is Vitamin K-dependent protein C (458 aa).

Residues 1–27 form the signal peptide; sequence IPDDVGYRNQKTASKEGVCVVSKCQDG. Positions 28–36 are excised as a propeptide; that stretch reads PNTLPRAKR. The region spanning 37 to 82 is the Gla domain; that stretch reads ANSFLEELRPSSLERECVEEVCDLEEAKEIFQSVDDTLAFWYKYVD. Residues E42, E43, E50, E52, E55, E56, E61, E62, and E65 each carry the 4-carboxyglutamate modification. C53 and C58 are joined by a disulfide. Disulfide bonds link C86/C105, C95/C100, C99/C114, and C116/C125. 2 consecutive EGF-like domains span residues 91 to 126 and 130 to 170; these read SEHP…SFCQ and RFSN…LQCE. At D107 the chain carries (3R)-3-hydroxyaspartate. Residue N133 is glycosylated (N-linked (GlcNAc...) asparagine). Intrachain disulfides connect C134-C145, C141-C154, C156-C169, C177-C316, and C235-C251. The Peptidase S1 domain occupies 210–447; sequence IDGKLTRRGD…YLDWIHSHIE (238 aa). H250 functions as the Charge relay system in the catalytic mechanism. The N-linked (GlcNAc...) asparagine glycan is linked to N287. The active-site Charge relay system is the D296. Residue N352 is glycosylated (N-linked (GlcNAc...) asparagine). 2 disulfides stabilise this stretch: C370/C384 and C395/C423. Residue S399 is the Charge relay system of the active site.

The protein belongs to the peptidase S1 family. As to quaternary structure, synthesized as a single chain precursor, which is cleaved into a light chain and a heavy chain held together by a disulfide bond. The enzyme is then activated by thrombin, which cleaves a tetradecapeptide from the amino end of the heavy chain; this reaction, which occurs at the surface of endothelial cells, is strongly promoted by thrombomodulin. Post-translationally, the vitamin K-dependent, enzymatic carboxylation of some Glu residues allows the modified protein to bind calcium. In terms of processing, the iron and 2-oxoglutarate dependent 3-hydroxylation of aspartate and asparagine is (R) stereospecific within EGF domains. As to expression, plasma; synthesized in the liver.

It localises to the secreted. The protein resides in the golgi apparatus. Its subcellular location is the endoplasmic reticulum. It catalyses the reaction Degradation of blood coagulation factors Va and VIIIa.. Its function is as follows. Protein C is a vitamin K-dependent serine protease that regulates blood coagulation by inactivating factors Va and VIIIa in the presence of calcium ions and phospholipids. Exerts a protective effect on the endothelial cell barrier function. The sequence is that of Vitamin K-dependent protein C (PROC) from Oryctolagus cuniculus (Rabbit).